The following is a 123-amino-acid chain: MEMDKQIYLELWNRTPSDVKELVLDSCKSIEGKIEGLTDEFEELEFLSTINVGLTFISNLPKLNKLKKLELSENRISGDLEVLAEKCPNLKHLNLSGNKIKDLSTIELLKKLENLKSLDLFNC.

LRR repeat units follow at residues 43–64, 65–87, 89–110, and 114–123; these read ELEFLSTINVGLTFISNLPKLN, KLKKLELSENRISGDLEVLAEKC, NLKHLNLSGNKIKDLSTIELLK, and NLKSLDLFNC.

It belongs to the ANP32 family.

This Mus musculus (Mouse) protein is Putative acidic leucine-rich nuclear phosphoprotein 32 family member C (Anp32c).